The following is a 608-amino-acid chain: Microtubule-associated protein VP7 (608 aa).

The protein resides in the virion. It localises to the host cytoplasm. The protein localises to the host cytoskeleton. Minor inner capsid component. Displays NTPase and RNA 5'-triphosphatase (RTPase) activities. May function as a cofactor of polymerase. Associates with microtubules and plays a role in the formation, structural organization and morphology of viral inclusions, where the assembly of cores and the replication of viral RNA occur. The sequence is that of Microtubule-associated protein VP7 from Oryza latifolia (Indian wild rice).